The chain runs to 727 residues: Platelet endothelial cell adhesion molecule (727 aa).

A signal peptide spans 1 to 17 (MLLALGLTLVLYASLQA). Over 18–590 (EENSFTINSI…VRVFLAPWKK (573 aa)) the chain is Extracellular. 6 Ig-like C2-type domains span residues 40–126 (GQQL…PKVT), 135–213 (GGVV…PIRS), 225–309 (PKFE…IMVN), 315–391 (PKPK…LVPI), 413–472 (GHAI…NCHS), and 488–578 (PVDE…RSST). Residues Cys-47 and Cys-99 are joined by a disulfide bond. Residues Asn-74 and Asn-141 are each glycosylated (N-linked (GlcNAc...) asparagine). 2 disulfide bridges follow: Cys-142–Cys-195 and Cys-245–Cys-293. 5 N-linked (GlcNAc...) asparagine glycosylation sites follow: Asn-309, Asn-345, Asn-360, Asn-424, and Asn-540. Disulfide bonds link Cys-336–Cys-375, Cys-420–Cys-465, and Cys-512–Cys-561. Residues 591–609 (GLIAVVVIGVVIATLIVAA) form a helical membrane-spanning segment. Over 610–727 (KCYFLRKAKA…SRTEGSLNGT (118 aa)) the chain is Cytoplasmic. Cys-611 carries the S-palmitoyl cysteine lipid modification. The tract at residues 642–672 (SEPSVEANSHYGYDDVSGNDAVKPINQNKDP) is disordered. Short sequence motifs (ITIM motif) lie at residues 677-682 (VEYTEV) and 700-705 (TVYSEI). Phosphotyrosine; by FER occurs at positions 679 and 702. A membrane-bound segment which detaches upon phosphorylation region spans residues 698-718 (TETVYSEIRKVDPNLMENRYS). A may play a role in cytoprotective signaling region spans residues 710-727 (PNLMENRYSRTEGSLNGT). Residues Ser-718 and Ser-723 each carry the phosphoserine modification.

As to quaternary structure, trans-homodimer (via Ig-like C2-type 1 and Ig-like C2-type 2 domains); trans-homodimerization is required for cell-cell interaction. Forms a complex with BDKRB2 and GNAQ. Interacts with BDKRB2 and GNAQ. Interacts with PTPN11; Tyr-702 is critical for PTPN11 recruitment. Interacts with FER. Interacts with CD177; the interaction is Ca(2+)-dependent; the interaction is direct. Phosphorylated on Ser and Tyr residues by src kinases after cellular activation. Upon activation, phosphorylated on Ser-718 which probably initiates the dissociation of the membrane-interaction segment (residues 698-718) from the cell membrane allowing the sequential phosphorylation of Tyr-702 and Tyr-679. Constitutively phosphorylated on Ser-723 in resting platelets. Phosphorylated on tyrosine residues by FER and FES in response to FCER1 activation. In endothelial cells Fyn mediates mechanical-force (stretch or pull) induced tyrosine phosphorylation. In terms of processing, palmitoylation by ZDHHC21 is necessary for cell surface expression in endothelial cells and enrichment in membrane rafts. As to expression, expressed in lung and platelets (at protein level).

It localises to the cell membrane. Its subcellular location is the membrane raft. The protein resides in the cell junction. In terms of biological role, cell adhesion molecule which is required for leukocyte transendothelial migration (TEM) under most inflammatory conditions. Tyr-679 plays a critical role in TEM and is required for efficient trafficking of PECAM1 to and from the lateral border recycling compartment (LBRC) and is also essential for the LBRC membrane to be targeted around migrating leukocytes. Trans-homophilic interaction may play a role in endothelial cell-cell adhesion via cell junctions. Heterophilic interaction with CD177 plays a role in transendothelial migration of neutrophils. Homophilic ligation of PECAM1 prevents macrophage-mediated phagocytosis of neighboring viable leukocytes by transmitting a detachment signal. Promotes macrophage-mediated phagocytosis of apoptotic leukocytes by tethering them to the phagocytic cells; PECAM1-mediated detachment signal appears to be disabled in apoptotic leukocytes. Modulates bradykinin receptor BDKRB2 activation. Regulates bradykinin- and hyperosmotic shock-induced ERK1/2 activation in endothelial cells. Induces susceptibility to atherosclerosis. The protein is Platelet endothelial cell adhesion molecule (Pecam1) of Mus musculus (Mouse).